Here is a 244-residue protein sequence, read N- to C-terminus: 7-cyano-7-deazaguanine synthase (244 aa).

14 to 24 (FSGGQDSATCV) is a binding site for ATP. 4 residues coordinate Zn(2+): C202, C217, C220, and C223.

This sequence belongs to the QueC family. Zn(2+) is required as a cofactor.

The enzyme catalyses 7-carboxy-7-deazaguanine + NH4(+) + ATP = 7-cyano-7-deazaguanine + ADP + phosphate + H2O + H(+). The protein operates within purine metabolism; 7-cyano-7-deazaguanine biosynthesis. In terms of biological role, catalyzes the ATP-dependent conversion of 7-carboxy-7-deazaguanine (CDG) to 7-cyano-7-deazaguanine (preQ(0)). The protein is 7-cyano-7-deazaguanine synthase of Burkholderia ambifaria (strain MC40-6).